The following is a 338-amino-acid chain: Fe-S cluster assembly protein DRE2 (338 aa).

Positions 1–165 (MAKSGLLLIH…LPSFKKAANK (165 aa)) are N-terminal SAM-like domain. The linker stretch occupies residues 166-232 (PLPTFKKKVE…DDLLNEEDAK (67 aa)). Residues 181–223 (VEARVHKAENDDDELEDEEDENLFDASRSKYFDEDDSESLDED) are disordered. Acidic residues-rich tracts occupy residues 190–203 (NDDD…DENL) and 213–223 (DEDDSESLDED). [2Fe-2S] cluster-binding residues include C242, C253, C256, and C258. Positions 242–258 (CGKSKTKKKKACKDCSC) are fe-S binding site A. 4 residues coordinate [4Fe-4S] cluster: C301, C304, C312, and C315. 2 short sequence motifs (cx2C motif) span residues 301–304 (CGSC) and 312–315 (CTGC). Positions 301–315 (CGSCSLGDAFRCTGC) are fe-S binding site B.

The protein belongs to the anamorsin family. In terms of assembly, monomer. Interacts with TAH18. Interacts with MIA40. The cofactor is [2Fe-2S] cluster. [4Fe-4S] cluster serves as cofactor.

The protein localises to the cytoplasm. The protein resides in the mitochondrion intermembrane space. Functionally, component of the cytosolic iron-sulfur (Fe-S) protein assembly (CIA) machinery required for the maturation of extramitochondrial Fe-S proteins. Part of an electron transfer chain functioning in an early step of cytosolic Fe-S biogenesis, facilitating the de novo assembly of a [4Fe-4S] cluster on the scaffold complex CFD1-NBP35. Electrons are transferred to DRE2 from NADPH via the FAD- and FMN-containing protein TAH18. TAH18-DRE2 are also required for the assembly of the diferric tyrosyl radical cofactor of ribonucleotide reductase (RNR), probably by providing electrons for reduction during radical cofactor maturation in the catalytic small subunit RNR2. In Candida glabrata (strain ATCC 2001 / BCRC 20586 / JCM 3761 / NBRC 0622 / NRRL Y-65 / CBS 138) (Yeast), this protein is Fe-S cluster assembly protein DRE2.